A 276-amino-acid polypeptide reads, in one-letter code: MHPAAEHSPLGKSSEYIATYSPEQLFPIPRTAKWAELGVTAQTLPWQGVDYWNCFELSWLLPSGKPVVAIGEFAIPADSPNIIESKSFKLYLNSLNQTVFASLDALQACLEKDLSAAAGKPVGVKVRTLAEVEAQGVVALPGQCIDALDVAISNYEQPQPELLRCDPARVVEETLHSHLLKSNCPVTGQPDWGSVVVEYKGRALDHASLLTYLISFRQHADFHEQCVERIYLDLKNLLQPEHLTVYARYVRRGGLDINPYRSTGAISPDNKRLVRQ.

83-85 contacts substrate; sequence IES. 85 to 86 is an NADPH binding site; it reads SK. Catalysis depends on C184, which acts as the Thioimide intermediate. Catalysis depends on D191, which acts as the Proton donor. Position 223-224 (223-224) interacts with substrate; it reads HE. 252-253 provides a ligand contact to NADPH; that stretch reads RG.

This sequence belongs to the GTP cyclohydrolase I family. QueF type 2 subfamily. In terms of assembly, homodimer.

The protein localises to the cytoplasm. The catalysed reaction is 7-aminomethyl-7-carbaguanine + 2 NADP(+) = 7-cyano-7-deazaguanine + 2 NADPH + 3 H(+). The protein operates within tRNA modification; tRNA-queuosine biosynthesis. Catalyzes the NADPH-dependent reduction of 7-cyano-7-deazaguanine (preQ0) to 7-aminomethyl-7-deazaguanine (preQ1). The chain is NADPH-dependent 7-cyano-7-deazaguanine reductase from Pseudomonas putida (strain ATCC 700007 / DSM 6899 / JCM 31910 / BCRC 17059 / LMG 24140 / F1).